We begin with the raw amino-acid sequence, 154 residues long: Large ribosomal subunit protein uL13 (154 aa).

It belongs to the universal ribosomal protein uL13 family. In terms of assembly, part of the 50S ribosomal subunit.

Functionally, this protein is one of the early assembly proteins of the 50S ribosomal subunit, although it is not seen to bind rRNA by itself. It is important during the early stages of 50S assembly. This is Large ribosomal subunit protein uL13 from Bradyrhizobium sp. (strain BTAi1 / ATCC BAA-1182).